A 501-amino-acid chain; its full sequence is Aldehyde dehydrogenase 1A1 (501 aa).

An N-acetylserine modification is found at Ser2. N6-acetyllysine is present on residues Lys91 and Lys128. Residues 167–170, 193–196, 226–227, and 246–247 contribute to the NAD(+) site; these read IPWN, KPAE, GP, and GS. Lys252 carries the N6-acetyllysine modification. Glu269 acts as the Proton acceptor in catalysis. NAD(+) is bound at residue 269–271; sequence ELG. The Nucleophile role is filled by Cys303. The mediates interaction with PRMT3 stretch occupies residues 336–501; the sequence is LNSGINQGPQ…VAIKISQKNS (166 aa). An NAD(+)-binding site is contributed by 349–353; it reads EQHDK. Lys353 and Lys367 each carry N6-acetyllysine. 400–402 is a binding site for NAD(+); that stretch reads EIF. Position 410 is an N6-acetyllysine (Lys410). Residue Ser413 is modified to Phosphoserine. Lys419, Lys435, and Lys495 each carry N6-acetyllysine.

Belongs to the aldehyde dehydrogenase family. As to quaternary structure, homotetramer. Interacts with PRMT3; the interaction is direct, inhibits ALDH1A1 aldehyde dehydrogenase activity and is independent of the methyltransferase activity of PRMT3. In terms of processing, the N-terminus is blocked most probably by acetylation.

The protein localises to the cytoplasm. It is found in the cytosol. Its subcellular location is the cell projection. The protein resides in the axon. It carries out the reaction an aldehyde + NAD(+) + H2O = a carboxylate + NADH + 2 H(+). It catalyses the reaction all-trans-retinal + NAD(+) + H2O = all-trans-retinoate + NADH + 2 H(+). The enzyme catalyses 9-cis-retinal + NAD(+) + H2O = 9-cis-retinoate + NADH + 2 H(+). The catalysed reaction is 11-cis-retinal + NAD(+) + H2O = 11-cis-retinoate + NADH + 2 H(+). It carries out the reaction 13-cis-retinal + NAD(+) + H2O = 13-cis-retinoate + NADH + 2 H(+). It catalyses the reaction 3-deoxyglucosone + NAD(+) + H2O = 2-dehydro-3-deoxy-D-gluconate + NADH + 2 H(+). The enzyme catalyses (E)-4-hydroxynon-2-enal + NAD(+) + H2O = (E)-4-hydroxynon-2-enoate + NADH + 2 H(+). The catalysed reaction is malonaldehyde + NAD(+) + H2O = 3-oxopropanoate + NADH + 2 H(+). It carries out the reaction hexanal + NAD(+) + H2O = hexanoate + NADH + 2 H(+). It catalyses the reaction propanal + NAD(+) + H2O = propanoate + NADH + 2 H(+). The enzyme catalyses acetaldehyde + NAD(+) + H2O = acetate + NADH + 2 H(+). The catalysed reaction is benzaldehyde + NAD(+) + H2O = benzoate + NADH + 2 H(+). It carries out the reaction 4-aminobutanal + NAD(+) + H2O = 4-aminobutanoate + NADH + 2 H(+). Its pathway is cofactor metabolism; retinol metabolism. In terms of biological role, cytosolic dehydrogenase that catalyzes the irreversible oxidation of a wide range of aldehydes to their corresponding carboxylic acid. Functions downstream of retinol dehydrogenases and catalyzes the oxidation of retinaldehyde into retinoic acid, the second step in the oxidation of retinol/vitamin A into retinoic acid. This pathway is crucial to control the levels of retinol and retinoic acid, two important molecules which excess can be teratogenic and cytotoxic. Also oxidizes aldehydes resulting from lipid peroxidation like (E)-4-hydroxynon-2-enal/HNE, malonaldehyde and hexanal that form protein adducts and are highly cytotoxic. By participating for instance to the clearance of (E)-4-hydroxynon-2-enal/HNE in the lens epithelium prevents the formation of HNE-protein adducts and lens opacification. Also functions downstream of fructosamine-3-kinase in the fructosamine degradation pathway by catalyzing the oxidation of 3-deoxyglucosone, the carbohydrate product of fructosamine 3-phosphate decomposition, which is itself a potent glycating agent that may react with lysine and arginine side-chains of proteins. Also has an aminobutyraldehyde dehydrogenase activity and is probably part of an alternative pathway for the biosynthesis of GABA/4-aminobutanoate in midbrain, thereby playing a role in GABAergic synaptic transmission. The polypeptide is Aldehyde dehydrogenase 1A1 (Mesocricetus auratus (Golden hamster)).